The following is a 232-amino-acid chain: MAIDMLSTFIKPMHREGKKFVAIFAGVTLLLFLIWEPLGWIGVLLTVWCYYFFRDPVRITPTREGLIVSPADGVVSLIEPAVPPAELGMGPEPMTRVSVFMSVFDCHVNRAPIGGTVTAVAYRPGKFLNASLDKASVDNERNALAIRLADGRQIAVVQIAGLVARRILCDVKEGTPLLTGERFGMIRFGSRLDVYLPEGVEPLVSIGQVMTSGETVLADLTSTEARRSGAAR.

Catalysis depends on S190, which acts as the Schiff-base intermediate with substrate; via pyruvic acid. S190 is modified (pyruvic acid (Ser); by autocatalysis).

Belongs to the phosphatidylserine decarboxylase family. PSD-A subfamily. Heterodimer of a large membrane-associated beta subunit and a small pyruvoyl-containing alpha subunit. Pyruvate is required as a cofactor. In terms of processing, is synthesized initially as an inactive proenzyme. Formation of the active enzyme involves a self-maturation process in which the active site pyruvoyl group is generated from an internal serine residue via an autocatalytic post-translational modification. Two non-identical subunits are generated from the proenzyme in this reaction, and the pyruvate is formed at the N-terminus of the alpha chain, which is derived from the carboxyl end of the proenzyme. The post-translation cleavage follows an unusual pathway, termed non-hydrolytic serinolysis, in which the side chain hydroxyl group of the serine supplies its oxygen atom to form the C-terminus of the beta chain, while the remainder of the serine residue undergoes an oxidative deamination to produce ammonia and the pyruvoyl prosthetic group on the alpha chain.

It is found in the cell membrane. The enzyme catalyses a 1,2-diacyl-sn-glycero-3-phospho-L-serine + H(+) = a 1,2-diacyl-sn-glycero-3-phosphoethanolamine + CO2. It participates in phospholipid metabolism; phosphatidylethanolamine biosynthesis; phosphatidylethanolamine from CDP-diacylglycerol: step 2/2. Its function is as follows. Catalyzes the formation of phosphatidylethanolamine (PtdEtn) from phosphatidylserine (PtdSer). The polypeptide is Phosphatidylserine decarboxylase proenzyme (Cereibacter sphaeroides (strain ATCC 17025 / ATH 2.4.3) (Rhodobacter sphaeroides)).